Reading from the N-terminus, the 440-residue chain is Xaa-Pro dipeptidase (440 aa).

Mn(2+) contacts are provided by D244, D255, H335, E380, and E419.

It belongs to the peptidase M24B family. Bacterial-type prolidase subfamily. Mn(2+) serves as cofactor.

The catalysed reaction is Xaa-L-Pro dipeptide + H2O = an L-alpha-amino acid + L-proline. Splits dipeptides with a prolyl residue in the C-terminal position. This Shewanella denitrificans (strain OS217 / ATCC BAA-1090 / DSM 15013) protein is Xaa-Pro dipeptidase.